The sequence spans 1777 residues: Non-reducing polyketide synthase nscA (1777 aa).

Residues 27-261 are N-terminal acylcarrier protein transacylase domain (SAT); it reads DLFRRLDQHS…PLPVYDGLCH (235 aa). The 434-residue stretch at 396 to 829 folds into the Ketosynthase family 3 (KS3) domain; it reads SSKLAIVGMA…GGNTTLLLED (434 aa). Active-site for beta-ketoacyl synthase activity residues include Cys569, His704, and His747. Residues 934–1212 form a malonyl-CoA:ACP transacylase (MAT) domain region; that stretch reads AFTGQGAYYH…SAIPSCRRNE (279 aa). Residues 1297–1616 form a product template (PT) domain region; sequence TSLVHQITAE…RLLMDRFFSP (320 aa). Residues 1301–1437 form an N-terminal hotdog fold region; sequence HQITAETVEA…ATIRFEDPEA (137 aa). The PKS/mFAS DH domain occupies 1301–1611; it reads HQITAETVEA…FRRVPRLLMD (311 aa). His1333 serves as the catalytic Proton acceptor; for dehydratase activity. The segment at 1465-1611 is C-terminal hotdog fold; sequence ASRLSKPLAY…FRRVPRLLMD (147 aa). Asp1522 serves as the catalytic Proton donor; for dehydratase activity. Residues 1674–1704 are disordered; it reads LLATSSKSSTPKESPIVTPAESERAEPVDNS. The span at 1677–1688 shows a compositional bias: low complexity; that stretch reads TSSKSSTPKESP. A Carrier domain is found at 1700-1777; sequence PVDNSMTSQC…EMTAWIEEYC (78 aa). At Ser1737 the chain carries O-(pantetheine 4'-phosphoryl)serine.

Requires pantetheine 4'-phosphate as cofactor.

It participates in secondary metabolite biosynthesis. Its function is as follows. Non-reducing polyketide synthase; part of the gene cluster that mediates the biosynthesis of neosartoricin B, a prenylated anthracenone that probably exhibits T-cell antiproliferative activity, suggestive of a physiological role as an immunosuppressive agent. The non-reducing polyketide synthase nscA probably synthesizes and cyclizes the decaketide backbone. The hydrolase nscB then mediates the product release through hydrolysis followed by spontaneous decarboxylation. The prenyltransferase nscD catalyzes the addition of the dimethylallyl group to the aromatic C5. The FAD-dependent monooxygenase nscC is then responsible for the stereospecific hydroxylation at C2. Neosartoricin B can be converted into two additional compounds neosartoricins C and D. Neosartoricin C is a spirocyclic compound that is cyclized through the attack of C3 hydroxyl on C14, followed by dehydration. On the other hand, neosartoricin D is a further cyclized compound in which attack of C2 on C14 in neosartoricin C results in the formation of the acetal-containing dioxabicyclo-octanone ring. Both of these compounds are novel and possibly represent related metabolites of the gene cluster. The chain is Non-reducing polyketide synthase nscA from Trichophyton equinum (strain ATCC MYA-4606 / CBS 127.97) (Horse ringworm fungus).